The primary structure comprises 176 residues: Co-chaperone protein HscB (176 aa).

The 73-residue stretch at 2-74 (DYFTLFGLPA…LMRAEYLLSL (73 aa)) folds into the J domain.

It belongs to the HscB family. As to quaternary structure, interacts with HscA and stimulates its ATPase activity. Interacts with IscU.

Functionally, co-chaperone involved in the maturation of iron-sulfur cluster-containing proteins. Seems to help targeting proteins to be folded toward HscA. The polypeptide is Co-chaperone protein HscB (Escherichia coli O7:K1 (strain IAI39 / ExPEC)).